The following is a 118-amino-acid chain: uncharacterized protein (118 aa).

Residues 1–26 form the signal peptide; sequence MTKLKMLSMLTVMIASLFIFSSQALA. Residues 30–104 enclose the SH3b domain; it reads FTVSTSSGAP…VNIGYVSDTY (75 aa).

It to B.subtilis YraI.

This is an uncharacterized protein from Bacillus subtilis (strain 168).